The chain runs to 322 residues: Elongation factor P--(R)-beta-lysine ligase (322 aa).

75-77 contacts substrate; sequence SPE. Residue 99-101 participates in ATP binding; it reads RNE. Tyr117 is a binding site for substrate. ATP is bound at residue 241–242; the sequence is EL. Glu248 is a substrate binding site. Gly297 contributes to the ATP binding site.

The protein belongs to the class-II aminoacyl-tRNA synthetase family. EpmA subfamily. In terms of assembly, homodimer.

It catalyses the reaction D-beta-lysine + L-lysyl-[protein] + ATP = N(6)-((3R)-3,6-diaminohexanoyl)-L-lysyl-[protein] + AMP + diphosphate + H(+). With EpmB is involved in the beta-lysylation step of the post-translational modification of translation elongation factor P (EF-P). Catalyzes the ATP-dependent activation of (R)-beta-lysine produced by EpmB, forming a lysyl-adenylate, from which the beta-lysyl moiety is then transferred to the epsilon-amino group of a conserved specific lysine residue in EF-P. This Avibacterium paragallinarum (Haemophilus gallinarum) protein is Elongation factor P--(R)-beta-lysine ligase.